A 523-amino-acid chain; its full sequence is UDP-glucuronosyltransferase 3A1 (523 aa).

Residues 1–22 (MAGQQALLLFGFILPGLLFSEA) form the signal peptide. Topologically, residues 23–483 (AKILTVSLVG…HAFQQPWYEQ (461 aa)) are extracellular. An N-linked (GlcNAc...) asparagine glycan is attached at Asn-52. Residues 484-504 (YLLDVFLFLLVVTLGTMWLCG) traverse the membrane as a helical segment. Residues 505 to 523 (KLLGLVARWLCGARKLKKA) lie on the Cytoplasmic side of the membrane.

Belongs to the UDP-glycosyltransferase family.

Its subcellular location is the membrane. The enzyme catalyses glucuronate acceptor + UDP-alpha-D-glucuronate = acceptor beta-D-glucuronoside + UDP + H(+). Functionally, UDP-glucuronosyltransferases catalyze phase II biotransformation reactions in which lipophilic substrates are conjugated with glucuronic acid to increase water solubility and enhance excretion. They are of major importance in the conjugation and subsequent elimination of potentially toxic xenobiotics and endogenous compounds. The sequence is that of UDP-glucuronosyltransferase 3A1 (UGT3A1) from Bos taurus (Bovine).